We begin with the raw amino-acid sequence, 596 residues long: Ubiquilin-4 (596 aa).

The Ubiquitin-like domain maps to 13-87; sequence IRVTVKTPKD…VHLVIKTPQK (75 aa). Residues K23 and K62 each participate in a glycyl lysine isopeptide (Lys-Gly) (interchain with G-Cter in SUMO2) cross-link. The disordered stretch occupies residues 89–148; sequence QDPVTAAASPPSTPDSASAPSTTPASPAAAPVQPCSSGNTTSDAGSGGGPSPVAAEGPSS. 2 stretches are compositionally biased toward low complexity: residues 93–119 and 139–148; these read TAAA…AAAP and SPVAAEGPSS. S139 carries the post-translational modification Phosphoserine. 2 STI1 domains span residues 187–224 and 225–256; these read NPEM…QQLM and ERNP…MQEM. A Phosphothreonine modification is found at T282. A disordered region spans residues 297 to 361; sequence GNNPFSSLAG…QVHPTVSNPF (65 aa). A compositionally biased stretch (low complexity) spans 302–313; the sequence is SSLAGNSDNSSS. S313 bears the Phosphoserine mark. Residues 324–335 are compositionally biased toward pro residues; it reads LPNPWSPSPPTS. Residues 339-349 are compositionally biased toward gly residues; it reads GSGGEGTGGSG. The span at 352-361 shows a compositional bias: polar residues; it reads QVHPTVSNPF. STI1 domains lie at 388–435 and 439–471; these read NPQL…QEQL and LPVF…QQGL. Positions 482–528 are disordered; sequence VPSLGSFGTPRTSVPLAGSNSGSSAEAPTSSPGVPATSPPSAGSNAQ. A compositionally biased stretch (polar residues) spans 499–513; it reads GSNSGSSAEAPTSSP. One can recognise a UBA domain in the interval 548 to 593; it reads PMPEVRFQQQLEQLNSMGFINREANLQALIATGGDINAAIERLLGS.

In terms of assembly, homooligomer. Binds signal sequences of proteins that are targeted to the endoplasmic reticulum. Interacts (via UBA domain) with GJA1 (not ubiquitinated) and with ubiquitin; both compete for the same binding site. Interacts (via UBA domain) with ubiquitin and with polyubiquitin chains. Interacts (via ubiquitin-like domain) with PSMD2 and PSMD4, regulatory subunits of the 26S proteasome. Interacts with ATXN1/SCA1; interaction with ATXN1 inhibits polyubiquitination of UBQLN4 and interferes with PSMD4 binding. Interacts with HERPUD1. Interacts (via ubiquitin-like domain) with UBQLN1 (via UBA domain). Interacts with UBQLN2. Interacts (via STI1 1 and 2 domains) with MAP1LC3A/B/C. Interacts with BAG6. Interacts with MRE11 (when ubiquitinated); interaction with ubiquitinated MRE11 leads to MRE11 removal from chromatin. Interacts with DESI1/POST; leading to nuclear export. Interacts with BCL2A1 and BCL2L10. Post-translationally, phosphorylated by ATM at Ser-313 in response to DNA damage, leading to localization in the nucleus and recruitment to sites of DNA damage. In terms of processing, ubiquitinated; this does not lead to proteasomal degradation. May undergo both 'Lys-48'- and 'Lys-63'-linked polyubiquitination. In terms of tissue distribution, detected in testis, ovary, thyroid, kidney, thymus, heart, liver, lung and spleen (at protein level). Highly expressed in heart, skeletal muscle, kidney, liver and brain. Detected at lower levels in testis, lung and spleen.

The protein resides in the nucleus. It localises to the cytoplasm. Its subcellular location is the chromosome. The protein localises to the endoplasmic reticulum. It is found in the perinuclear region. The protein resides in the cytoplasmic vesicle. It localises to the autophagosome. In terms of biological role, regulator of protein degradation that mediates the proteasomal targeting of misfolded, mislocalized or accumulated proteins. Acts by binding polyubiquitin chains of target proteins via its UBA domain and by interacting with subunits of the proteasome via its ubiquitin-like domain. Key regulator of DNA repair that represses homologous recombination repair: in response to DNA damage, recruited to sites of DNA damage following phosphorylation by ATM and acts by binding and removing ubiquitinated MRE11 from damaged chromatin, leading to MRE11 degradation by the proteasome. MRE11 degradation prevents homologous recombination repair, redirecting double-strand break repair toward non-homologous end joining (NHEJ). Specifically recognizes and binds mislocalized transmembrane-containing proteins and targets them to proteasomal degradation. Collaborates with DESI1/POST in the export of ubiquitinated proteins from the nucleus to the cytoplasm. Plays a role in the regulation of the proteasomal degradation of non-ubiquitinated GJA1. Acts as an adapter protein that recruits UBQLN1 to the autophagy machinery. Mediates the association of UBQLN1 with autophagosomes and the autophagy-related protein LC3 (MAP1LC3A/B/C) and may assist in the maturation of autophagosomes to autolysosomes by mediating autophagosome-lysosome fusion. This is Ubiquilin-4 from Mus musculus (Mouse).